A 567-amino-acid chain; its full sequence is Urease subunit alpha (567 aa).

Residues histidine 134, histidine 136, and lysine 217 each contribute to the Ni(2+) site. Lysine 217 is subject to N6-carboxylysine. Substrate is bound at residue histidine 219. Positions 246 and 272 each coordinate Ni(2+). The active-site Proton donor is histidine 320. Aspartate 360 contributes to the Ni(2+) binding site.

Belongs to the metallo-dependent hydrolases superfamily. Urease alpha subunit family. In terms of assembly, heterotrimer of UreA (gamma), UreB (beta) and UreC (alpha) subunits. Three heterotrimers associate to form the active enzyme. Requires Ni cation as cofactor. Post-translationally, carboxylation allows a single lysine to coordinate two nickel ions.

It is found in the cytoplasm. The enzyme catalyses urea + 2 H2O + H(+) = hydrogencarbonate + 2 NH4(+). Its pathway is nitrogen metabolism; urea degradation; CO(2) and NH(3) from urea (urease route): step 1/1. The sequence is that of Urease subunit alpha from Polynucleobacter asymbioticus (strain DSM 18221 / CIP 109841 / QLW-P1DMWA-1) (Polynucleobacter necessarius subsp. asymbioticus).